We begin with the raw amino-acid sequence, 113 residues long: Large ribosomal subunit protein eL31A (113 aa).

Belongs to the eukaryotic ribosomal protein eL31 family. In terms of assembly, component of the large ribosomal subunit (LSU). Mature yeast ribosomes consist of a small (40S) and a large (60S) subunit. The 40S small subunit contains 1 molecule of ribosomal RNA (18S rRNA) and 33 different proteins (encoded by 57 genes). The large 60S subunit contains 3 rRNA molecules (25S, 5.8S and 5S rRNA) and 46 different proteins (encoded by 81 genes).

It is found in the cytoplasm. In terms of biological role, component of the ribosome, a large ribonucleoprotein complex responsible for the synthesis of proteins in the cell. The small ribosomal subunit (SSU) binds messenger RNAs (mRNAs) and translates the encoded message by selecting cognate aminoacyl-transfer RNA (tRNA) molecules. The large subunit (LSU) contains the ribosomal catalytic site termed the peptidyl transferase center (PTC), which catalyzes the formation of peptide bonds, thereby polymerizing the amino acids delivered by tRNAs into a polypeptide chain. The nascent polypeptides leave the ribosome through a tunnel in the LSU and interact with protein factors that function in enzymatic processing, targeting, and the membrane insertion of nascent chains at the exit of the ribosomal tunnel. This Saccharomyces cerevisiae (strain ATCC 204508 / S288c) (Baker's yeast) protein is Large ribosomal subunit protein eL31A.